The following is a 311-amino-acid chain: Olfactory receptor 8H1 (311 aa).

Topologically, residues 1 to 25 (MGRRNNTNVPDFILTGLSDSEEVQM) are extracellular. Residue Asn-5 is glycosylated (N-linked (GlcNAc...) asparagine). A helical membrane pass occupies residues 26 to 46 (ALFILFLLIYLITMLGNVGMI). The Cytoplasmic segment spans residues 47–54 (LIIRLDLQ). Residues 55–75 (LHTPMYFFLTHLSFIDLSYST) form a helical membrane-spanning segment. Residues 76 to 98 (VITPKTLANLLTSNYISFMGCFA) lie on the Extracellular side of the membrane. Cys-96 and Cys-188 form a disulfide bridge. The helical transmembrane segment at 99–119 (QMFFFVFLGAAECFLLSSMAY) threads the bilayer. Over 120 to 138 (DRYVAICSPLRYPVIMSKR) the chain is Cytoplasmic. A helical membrane pass occupies residues 139 to 159 (LCCALVTGPYVISFINSFVNV). The Extracellular segment spans residues 160–196 (VWMSRLHFCDSNVVRHFFCDTSPILALSCMDTYDIEI). The helical transmembrane segment at 197–216 (MIHILAGSTLMVSLITISAS) threads the bilayer. Topologically, residues 217-236 (YVSILSTILKINSTSGKQKA) are cytoplasmic. A helical transmembrane segment spans residues 237–257 (LSTCASHLLGVTIFYGTMIFT). Over 258 to 270 (YLKPRKSYSLGRD) the chain is Extracellular. A helical transmembrane segment spans residues 271 to 291 (QVASVFYTIVIPMLNPLIYSL). Topologically, residues 292–311 (RNKEVKNALIRVMQRRQDSR) are cytoplasmic.

The protein belongs to the G-protein coupled receptor 1 family.

The protein localises to the cell membrane. Its function is as follows. Odorant receptor. The sequence is that of Olfactory receptor 8H1 (OR8H1) from Homo sapiens (Human).